A 522-amino-acid chain; its full sequence is Light-independent protochlorophyllide reductase subunit B (522 aa).

Position 36 (aspartate 36) interacts with [4Fe-4S] cluster. Aspartate 274 (proton donor) is an active-site residue. A substrate-binding site is contributed by 409–410 (GL). The interval 426–464 (DEAGPSHHGGKAVPASAPRAEATADEGSTPEEAVPPVAA) is disordered. Low complexity predominate over residues 455-464 (PEEAVPPVAA).

It belongs to the ChlB/BchB/BchZ family. As to quaternary structure, protochlorophyllide reductase is composed of three subunits; BchL, BchN and BchB. Forms a heterotetramer of two BchB and two BchN subunits. Requires [4Fe-4S] cluster as cofactor.

It catalyses the reaction chlorophyllide a + oxidized 2[4Fe-4S]-[ferredoxin] + 2 ADP + 2 phosphate = protochlorophyllide a + reduced 2[4Fe-4S]-[ferredoxin] + 2 ATP + 2 H2O. It functions in the pathway porphyrin-containing compound metabolism; bacteriochlorophyll biosynthesis (light-independent). Its function is as follows. Component of the dark-operative protochlorophyllide reductase (DPOR) that uses Mg-ATP and reduced ferredoxin to reduce ring D of protochlorophyllide (Pchlide) to form chlorophyllide a (Chlide). This reaction is light-independent. The NB-protein (BchN-BchB) is the catalytic component of the complex. This is Light-independent protochlorophyllide reductase subunit B from Cereibacter sphaeroides (strain ATCC 17025 / ATH 2.4.3) (Rhodobacter sphaeroides).